The primary structure comprises 144 residues: Small ribosomal subunit protein bS6 (144 aa).

The interval 97 to 144 is disordered; the sequence is DTEQSLIMKSKDEKGDKPERSERRRRDDEEGDAAPAATDTDGDNAEAA. A compositionally biased stretch (basic and acidic residues) spans 105–124; the sequence is KSKDEKGDKPERSERRRRDD.

This sequence belongs to the bacterial ribosomal protein bS6 family.

In terms of biological role, binds together with bS18 to 16S ribosomal RNA. The protein is Small ribosomal subunit protein bS6 of Xanthomonas campestris pv. campestris (strain 8004).